The sequence spans 433 residues: Enolase (433 aa).

Q167 is a binding site for (2R)-2-phosphoglycerate. Residue E209 is the Proton donor of the active site. Residues D246, E291, and D318 each contribute to the Mg(2+) site. (2R)-2-phosphoglycerate-binding residues include K343, R372, S373, and K394. K343 (proton acceptor) is an active-site residue.

Belongs to the enolase family. In terms of assembly, component of the RNA degradosome, a multiprotein complex involved in RNA processing and mRNA degradation. The cofactor is Mg(2+).

The protein localises to the cytoplasm. The protein resides in the secreted. It is found in the cell surface. It catalyses the reaction (2R)-2-phosphoglycerate = phosphoenolpyruvate + H2O. It functions in the pathway carbohydrate degradation; glycolysis; pyruvate from D-glyceraldehyde 3-phosphate: step 4/5. Its function is as follows. Catalyzes the reversible conversion of 2-phosphoglycerate (2-PG) into phosphoenolpyruvate (PEP). It is essential for the degradation of carbohydrates via glycolysis. The chain is Enolase from Histophilus somni (strain 129Pt) (Haemophilus somnus).